We begin with the raw amino-acid sequence, 775 residues long: Isopimaradiene synthase (775 aa).

A chloroplast-targeting transit peptide spans 1–36 (MFSSSLKLKTNPLMDNKIHRSSSDRDFRGSTISSVK). The Mg(2+) site is built by Asp525, Asp529, Asn669, Gln672, and Glu677. Residues 525-529 (DDFFD) carry the DDXXD motif motif.

Belongs to the terpene synthase family. Mg(2+) serves as cofactor. In terms of tissue distribution, ubiquitous expression in roots, stems, leaves and flowers.

The protein resides in the plastid. Its subcellular location is the chloroplast. It carries out the reaction (+)-copalyl diphosphate = isopimara-8(14),15-diene + diphosphate. It participates in secondary metabolite biosynthesis; terpenoid biosynthesis. Its function is as follows. Involved in the biosynthesis of ent-kaurene diterpenoids natural products such as oridonin, miltiradiene, eriocalyxin B and nezukol, known to exhibit antitumor, anti-inflammatory and antibacterial activities. Catalyzes the conversion of (+)-copalyl diphosphate ((+)-CPP) to isopimaradiene. This is Isopimaradiene synthase from Isodon rubescens (Rabdosia rubescens).